Reading from the N-terminus, the 587-residue chain is Aspartate--tRNA ligase (587 aa).

Residue Glu-174 participates in L-aspartate binding. The segment at 198–201 (QITK) is aspartate. Arg-220 is an L-aspartate binding site. ATP-binding positions include 220-222 (RDE) and Gln-229. L-aspartate is bound at residue His-443. Position 477 (Glu-477) interacts with ATP. Arg-484 contacts L-aspartate. Position 529 to 532 (529 to 532 (GLDR)) interacts with ATP.

It belongs to the class-II aminoacyl-tRNA synthetase family. Type 1 subfamily. In terms of assembly, homodimer.

The protein localises to the cytoplasm. It catalyses the reaction tRNA(Asp) + L-aspartate + ATP = L-aspartyl-tRNA(Asp) + AMP + diphosphate. In terms of biological role, catalyzes the attachment of L-aspartate to tRNA(Asp) in a two-step reaction: L-aspartate is first activated by ATP to form Asp-AMP and then transferred to the acceptor end of tRNA(Asp). The sequence is that of Aspartate--tRNA ligase from Streptococcus pneumoniae (strain Hungary19A-6).